A 319-amino-acid chain; its full sequence is MLFATLEHILNHISFSTISIVITIHLITLLVHELGGLRDSSEKGMIVTFFSITGFLVSRWASSGHFPLSNLYESLIFLSWALYILHTIPKIQNSKNDLSTITTPSTILTQGFATSGLLTEMHQSTILVPALQSQWLMMHVSMMLLSYATLLCGSLLSAAILIIRFRNNFFFFSKKKKNVLLKTFFFSDFYVKRSSLKSTSVPSFPNYYKYQLTERLDSWSYRVISLGFTLLTIGILCGAVWANDAWGSYWNWDPKETWAFITWTIFAIYLHSRTNLNWKGTNSALVASIGFLIIWICYFGINLLGIGLHSYGSFILTSK.

7 helical membrane-spanning segments follow: residues 17–37, 44–64, 68–88, 143–163, 223–243, 257–271, and 286–306; these read TISIVITIHLITLLVHELGGL, GMIVTFFSITGFLVSRWASSG, LSNLYESLIFLSWALYILHTI, MLLSYATLLCGSLLSAAILII, VISLGFTLLTIGILCGAVWAN, TWAFITWTIFAIYLH, and VASIGFLIIWICYFGINLLGI.

Belongs to the CcmF/CycK/Ccl1/NrfE/CcsA family. In terms of assembly, may interact with Ccs1.

It is found in the plastid. The protein localises to the chloroplast thylakoid membrane. Required during biogenesis of c-type cytochromes (cytochrome c6 and cytochrome f) at the step of heme attachment. The polypeptide is Cytochrome c biogenesis protein CcsA (Lolium perenne (Perennial ryegrass)).